Consider the following 258-residue polypeptide: Protein SseB (258 aa).

In terms of biological role, may be involved in the enhancement of serine-sensitivity. This is Protein SseB (sseB) from Escherichia coli (strain K12).